The following is a 198-amino-acid chain: Large ribosomal subunit protein uL13 (198 aa).

This sequence belongs to the universal ribosomal protein uL13 family.

In Tetrahymena thermophila (strain SB210), this protein is Large ribosomal subunit protein uL13 (RPL13A).